Reading from the N-terminus, the 459-residue chain is Cysteine--tRNA ligase (459 aa).

Cysteine 29 provides a ligand contact to Zn(2+). Residues 31-41 (PTVYNLVHIGN) carry the 'HIGH' region motif. Zn(2+) is bound by residues cysteine 209, histidine 234, and glutamate 238. The 'KMSKS' region signature appears at 267-271 (KMSKS). Position 270 (lysine 270) interacts with ATP.

This sequence belongs to the class-I aminoacyl-tRNA synthetase family. As to quaternary structure, monomer. Requires Zn(2+) as cofactor.

Its subcellular location is the cytoplasm. It catalyses the reaction tRNA(Cys) + L-cysteine + ATP = L-cysteinyl-tRNA(Cys) + AMP + diphosphate. This is Cysteine--tRNA ligase from Saccharophagus degradans (strain 2-40 / ATCC 43961 / DSM 17024).